The primary structure comprises 247 residues: Cytochrome c oxidase subunit 2 (247 aa).

The Mitochondrial intermembrane segment spans residues 1-38 (MKEMMMSNMFNDVPTPWAMFFQDSATPNMEGMLELHNN). A helical membrane pass occupies residues 39–58 (VVFYLCMMLGFVTFMLYNML). The Mitochondrial matrix portion of the chain corresponds to 59-78 (TTYNKSVMPYKYLNQGQFME). A helical membrane pass occupies residues 79 to 103 (MMWTTLPAVMLLMIAFPSFILLYMC). At 104 to 247 (DEVMAPAMTI…ADFLAWIDEQ (144 aa)) the chain is on the mitochondrial intermembrane side. 6 residues coordinate Cu cation: histidine 182, cysteine 217, glutamate 219, cysteine 221, histidine 225, and methionine 228. Residue glutamate 219 coordinates Mg(2+).

This sequence belongs to the cytochrome c oxidase subunit 2 family. Component of the cytochrome c oxidase (complex IV, CIV), a multisubunit enzyme composed of a catalytic core of 3 subunits and several supernumerary subunits. The complex exists as a monomer or a dimer and forms supercomplexes (SCs) in the inner mitochondrial membrane with ubiquinol-cytochrome c oxidoreductase (cytochrome b-c1 complex, complex III, CIII). Requires Cu cation as cofactor.

Its subcellular location is the mitochondrion inner membrane. The enzyme catalyses 4 Fe(II)-[cytochrome c] + O2 + 8 H(+)(in) = 4 Fe(III)-[cytochrome c] + 2 H2O + 4 H(+)(out). In terms of biological role, component of the cytochrome c oxidase, the last enzyme in the mitochondrial electron transport chain which drives oxidative phosphorylation. The respiratory chain contains 3 multisubunit complexes succinate dehydrogenase (complex II, CII), ubiquinol-cytochrome c oxidoreductase (cytochrome b-c1 complex, complex III, CIII) and cytochrome c oxidase (complex IV, CIV), that cooperate to transfer electrons derived from NADH and succinate to molecular oxygen, creating an electrochemical gradient over the inner membrane that drives transmembrane transport and the ATP synthase. Cytochrome c oxidase is the component of the respiratory chain that catalyzes the reduction of oxygen to water. Electrons originating from reduced cytochrome c in the intermembrane space (IMS) are transferred via the dinuclear copper A center (CU(A)) of subunit 2 and heme A of subunit 1 to the active site in subunit 1, a binuclear center (BNC) formed by heme A3 and copper B (CU(B)). The BNC reduces molecular oxygen to 2 water molecules using 4 electrons from cytochrome c in the IMS and 4 protons from the mitochondrial matrix. The sequence is that of Cytochrome c oxidase subunit 2 (COX2) from Brettanomyces custersianus (Yeast).